A 182-amino-acid polypeptide reads, in one-letter code: Gas vesicle protein H1 (182 aa).

Acidic residues predominate over residues 1–11 (MVPDENDDASD). Disordered stretches follow at residues 1–21 (MVPD…SGLL) and 65–106 (GRAD…GGTS). Residues 12 to 21 (DQSSQLSGLL) show a composition bias toward low complexity. The segment covering 92-101 (TTEDSIHVET) has biased composition (basic and acidic residues).

It belongs to the gas vesicle GvpH family. As to quaternary structure, gvpF to GvpM interact with each other in vitro, and may form multi-subunit complex(es). Interacts with GvpC1. Might interact with GvpA1.

It is found in the cytoplasm. The protein localises to the gas vesicle. Its function is as follows. Proteins GvpF to GvpM might be involved in nucleating gas vesicle formation. May be important for the stability of gas vesicles. Gas vesicles are hollow, gas filled proteinaceous nanostructures found in several microbial planktonic microorganisms. They allow positioning of halobacteria at the optimal depth for growth in the poorly aerated, shallow brine pools of their habitat. Expression of a 9.5 kb p-vac DNA fragment containing 2 divergently transcribed regions (gvpD-gvpE-gvpF-gvpG-gvpH-gvpI-gvpJ-gvpK-gvpL-gvpM and gvpA-gvpC-gvpN-gvpO) allows H.volcanii to produce gas vesicles. A similar region restores gas vesicle production in H.halobium without the p-vac locus, but it still has the c-vac locus. The sequence is that of Gas vesicle protein H1 (gvpH11) from Halobacterium salinarum (strain ATCC 700922 / JCM 11081 / NRC-1) (Halobacterium halobium).